The following is a 668-amino-acid chain: L-type lectin-domain containing receptor kinase I.7 (668 aa).

An N-terminal signal peptide occupies residues 1–21 (MIRGLLLGIIWMIFCVCSSFQ). The Extracellular portion of the chain corresponds to 22 to 285 (QETPFVYNNF…SSTKKKSTSP (264 aa)). The interval 24-256 (TPFVYNNFGH…YQYILGWSFS (233 aa)) is legume-lectin like. Asn-56, Asn-125, Asn-167, Asn-201, and Asn-223 each carry an N-linked (GlcNAc...) asparagine glycan. The helical transmembrane segment at 286–306 (VLSVLLGLIAFIVLGILVVAY) threads the bilayer. Residues 307-668 (LYRRNLYSEV…THSVLYGSGR (362 aa)) are Cytoplasmic-facing. The Protein kinase domain maps to 341–620 (FNRSEFLGRG…LNGNLALPEF (280 aa)). ATP contacts are provided by residues 347–355 (LGRGGFGEV) and Lys-372. Asp-468 (proton acceptor) is an active-site residue.

The protein in the C-terminal section; belongs to the protein kinase superfamily. Ser/Thr protein kinase family. In the N-terminal section; belongs to the leguminous lectin family.

It localises to the cell membrane. The enzyme catalyses L-seryl-[protein] + ATP = O-phospho-L-seryl-[protein] + ADP + H(+). The catalysed reaction is L-threonyl-[protein] + ATP = O-phospho-L-threonyl-[protein] + ADP + H(+). In terms of biological role, involved in resistance response to the pathogenic oomycetes Phytophthora infestans and Phytophthora capsici. The protein is L-type lectin-domain containing receptor kinase I.7 of Arabidopsis thaliana (Mouse-ear cress).